Consider the following 490-residue polypeptide: Cytochrome P450 71A21 (490 aa).

The helical transmembrane segment at 1-21 (MESMTMIILQSLIIFITILFF) threads the bilayer. Cys-432 provides a ligand contact to heme.

The protein belongs to the cytochrome P450 family. It depends on heme as a cofactor.

It is found in the membrane. The polypeptide is Cytochrome P450 71A21 (CYP71A21) (Arabidopsis thaliana (Mouse-ear cress)).